A 209-amino-acid polypeptide reads, in one-letter code: Large ribosomal subunit protein uL3 (209 aa).

Q150 carries the post-translational modification N5-methylglutamine.

This sequence belongs to the universal ribosomal protein uL3 family. As to quaternary structure, part of the 50S ribosomal subunit. Forms a cluster with proteins L14 and L19. Post-translationally, methylated by PrmB.

Functionally, one of the primary rRNA binding proteins, it binds directly near the 3'-end of the 23S rRNA, where it nucleates assembly of the 50S subunit. This Photobacterium profundum (strain SS9) protein is Large ribosomal subunit protein uL3.